We begin with the raw amino-acid sequence, 727 residues long: 1,4-alpha-glucan branching enzyme GlgB (727 aa).

Catalysis depends on Asp-405, which acts as the Nucleophile. Glu-458 serves as the catalytic Proton donor.

The protein belongs to the glycosyl hydrolase 13 family. GlgB subfamily. In terms of assembly, monomer.

It carries out the reaction Transfers a segment of a (1-&gt;4)-alpha-D-glucan chain to a primary hydroxy group in a similar glucan chain.. It functions in the pathway glycan biosynthesis; glycogen biosynthesis. In terms of biological role, catalyzes the formation of the alpha-1,6-glucosidic linkages in glycogen by scission of a 1,4-alpha-linked oligosaccharide from growing alpha-1,4-glucan chains and the subsequent attachment of the oligosaccharide to the alpha-1,6 position. The polypeptide is 1,4-alpha-glucan branching enzyme GlgB (Yersinia pseudotuberculosis serotype I (strain IP32953)).